Reading from the N-terminus, the 196-residue chain is Small ribosomal subunit protein uS4c (196 aa).

A disordered region spans residues 16–36 (GTLPGLTSKRPKSGSDLKTQL). An S4 RNA-binding domain is found at 89–150 (MRLDNILFRL…KQRSKALIQN (62 aa)).

This sequence belongs to the universal ribosomal protein uS4 family. Part of the 30S ribosomal subunit. Contacts protein S5. The interaction surface between S4 and S5 is involved in control of translational fidelity.

It is found in the plastid. The protein resides in the chloroplast. Functionally, one of the primary rRNA binding proteins, it binds directly to 16S rRNA where it nucleates assembly of the body of the 30S subunit. In terms of biological role, with S5 and S12 plays an important role in translational accuracy. In Rhapis humilis (Slender lady palm), this protein is Small ribosomal subunit protein uS4c (rps4).